Here is a 728-residue protein sequence, read N- to C-terminus: FYN-binding protein 2 (728 aa).

Disordered stretches follow at residues 17–76 (QNLD…PLQP), 250–287 (QAPE…RPPI), and 367–390 (PGKN…EKQP). Residues 42–75 (GTQSTQILANGKPLSSNHKQRTPYCSSSESQPLQ) show a composition bias toward polar residues. Residues 276–285 (GPPPPKPSRP) show a composition bias toward pro residues. Residues 377-390 (SAKHEDKKMKEKQP) show a composition bias toward basic and acidic residues. Tyr491 is modified (phosphotyrosine). The short motif at 521–524 (YEDV) is the SH2-binding; to LCP2 element. Position 587 is a phosphotyrosine (Tyr587). The SH3 domain maps to 664–724 (IVINTAVACS…LIEHLDFKHQ (61 aa)).

As to quaternary structure, interacts with SKAP1, LCK and FYN. The phosphorylated form interacts with LCP2. Phosphorylation is required for its function in T-cell activation. In terms of tissue distribution, expressed in T-cells (at protein level). Widely expressed.

It localises to the membrane raft. Functionally, adapter protein that plays a role in T-cell receptor (TCR)-mediated activation of signaling pathways. Required for T-cell activation and integrin-mediated T-cell adhesion in response to TCR stimulation. In Homo sapiens (Human), this protein is FYN-binding protein 2.